Here is an 810-residue protein sequence, read N- to C-terminus: Glycerol-3-phosphate acyltransferase (810 aa).

An HXXXXD motif motif is present at residues 305–310 (CHRSHI).

It belongs to the GPAT/DAPAT family.

The protein localises to the cell inner membrane. The enzyme catalyses sn-glycerol 3-phosphate + an acyl-CoA = a 1-acyl-sn-glycero-3-phosphate + CoA. The protein operates within phospholipid metabolism; CDP-diacylglycerol biosynthesis; CDP-diacylglycerol from sn-glycerol 3-phosphate: step 1/3. The protein is Glycerol-3-phosphate acyltransferase of Haemophilus influenzae (strain PittEE).